Reading from the N-terminus, the 366-residue chain is Ribosomal RNA large subunit methyltransferase M (366 aa).

Residues serine 188, 221 to 224 (CPGG), aspartate 240, aspartate 260, and aspartate 277 each bind S-adenosyl-L-methionine. Lysine 306 serves as the catalytic Proton acceptor.

This sequence belongs to the class I-like SAM-binding methyltransferase superfamily. RNA methyltransferase RlmE family. RlmM subfamily. Monomer.

It localises to the cytoplasm. The enzyme catalyses cytidine(2498) in 23S rRNA + S-adenosyl-L-methionine = 2'-O-methylcytidine(2498) in 23S rRNA + S-adenosyl-L-homocysteine + H(+). Catalyzes the 2'-O-methylation at nucleotide C2498 in 23S rRNA. This Photorhabdus laumondii subsp. laumondii (strain DSM 15139 / CIP 105565 / TT01) (Photorhabdus luminescens subsp. laumondii) protein is Ribosomal RNA large subunit methyltransferase M.